The following is a 325-amino-acid chain: MTFAKITQAAHYVPENVVSNDDLSKIMDTNDEWIYSRTGIKNRHISTGENTSDLATKVAKQLIENSGVDPELIDFIIVATVTPDSMMPSTAARVQAQVGATNAFAYDLTAACSGFVFALSTAEKLISSGAYQRGIVIGAEVFSKVIDWSDRSTAVLFGDGAAGVLLDNSGSQPLIIAEKMQTDGKRGGSLLSSYADIQTPFASVSYEGSNLSMEGRAIFDFAVRDVPKNIQATLEKSDLAAEEIDYYLLHQANSRILDKMAKKLGVTRNKFLQNMQEYGNTSAASIPILLSESVKNGIFSLDGQTKVVLTGFGGGLTWGTAIINL.

Catalysis depends on residues C112 and H250. Residues 251–255 (QANSR) form an ACP-binding region. The active site involves N280.

This sequence belongs to the thiolase-like superfamily. FabH family. As to quaternary structure, homodimer.

The protein resides in the cytoplasm. It carries out the reaction malonyl-[ACP] + acetyl-CoA + H(+) = 3-oxobutanoyl-[ACP] + CO2 + CoA. It participates in lipid metabolism; fatty acid biosynthesis. Functionally, catalyzes the condensation reaction of fatty acid synthesis by the addition to an acyl acceptor of two carbons from malonyl-ACP. Catalyzes the first condensation reaction which initiates fatty acid synthesis and may therefore play a role in governing the total rate of fatty acid production. Possesses both acetoacetyl-ACP synthase and acetyl transacylase activities. Its substrate specificity determines the biosynthesis of branched-chain and/or straight-chain of fatty acids. The polypeptide is Beta-ketoacyl-[acyl-carrier-protein] synthase III (Lactococcus lactis subsp. cremoris (strain SK11)).